Here is a 211-residue protein sequence, read N- to C-terminus: 3-demethoxyubiquinol 3-hydroxylase (211 aa).

Glu-60, Glu-90, His-93, Glu-142, Glu-174, and His-177 together coordinate Fe cation.

Belongs to the COQ7 family. Requires Fe cation as cofactor.

Its subcellular location is the cell membrane. The catalysed reaction is a 5-methoxy-2-methyl-3-(all-trans-polyprenyl)benzene-1,4-diol + AH2 + O2 = a 3-demethylubiquinol + A + H2O. The protein operates within cofactor biosynthesis; ubiquinone biosynthesis. Its function is as follows. Catalyzes the hydroxylation of 2-nonaprenyl-3-methyl-6-methoxy-1,4-benzoquinol during ubiquinone biosynthesis. The sequence is that of 3-demethoxyubiquinol 3-hydroxylase from Herminiimonas arsenicoxydans.